The chain runs to 179 residues: Transcription factor 21 (179 aa).

Positions 23–87 (IKLDPNKEFG…QVQRNAANAR (65 aa)) are disordered. Polar residues predominate over residues 34–46 (SNDSNEESSTCDN). The span at 50–64 (KKGRGTSGKRRKAPS) shows a compositional bias: basic residues. Positions 70–80 (GNINQEGKQVQ) are enriched in polar residues. The 53-residue stretch at 79–131 (VQRNAANARERARMRVLSKAFSRLKTTLPWVPPDTKLSKLDTLRLASSYIAHL) folds into the bHLH domain.

In terms of assembly, efficient DNA binding requires dimerization with another bHLH protein.

The protein localises to the nucleus. Its function is as follows. Involved in epithelial-mesenchymal interactions in kidney and lung morphogenesis that include epithelial differentiation and branching morphogenesis. The protein is Transcription factor 21 (tcf21) of Xenopus tropicalis (Western clawed frog).